Consider the following 209-residue polypeptide: Uracil phosphoribosyltransferase (209 aa).

Residues arginine 79, arginine 104, and 131–139 (DPLLATGNS) each bind 5-phospho-alpha-D-ribose 1-diphosphate. Uracil contacts are provided by residues isoleucine 194 and 199-201 (GDA). 5-phospho-alpha-D-ribose 1-diphosphate is bound at residue aspartate 200.

Belongs to the UPRTase family. The cofactor is Mg(2+).

It catalyses the reaction UMP + diphosphate = 5-phospho-alpha-D-ribose 1-diphosphate + uracil. The protein operates within pyrimidine metabolism; UMP biosynthesis via salvage pathway; UMP from uracil: step 1/1. Its activity is regulated as follows. Allosterically activated by GTP. Catalyzes the conversion of uracil and 5-phospho-alpha-D-ribose 1-diphosphate (PRPP) to UMP and diphosphate. The polypeptide is Uracil phosphoribosyltransferase (Rhodococcus opacus (strain B4)).